Here is a 524-residue protein sequence, read N- to C-terminus: Bifunctional purine biosynthesis protein PurH (524 aa).

Residues 1–144 form the MGS-like domain; that stretch reads MVRRALVSVS…KNAAHVGVVV (144 aa).

The protein belongs to the PurH family.

It catalyses the reaction (6R)-10-formyltetrahydrofolate + 5-amino-1-(5-phospho-beta-D-ribosyl)imidazole-4-carboxamide = 5-formamido-1-(5-phospho-D-ribosyl)imidazole-4-carboxamide + (6S)-5,6,7,8-tetrahydrofolate. The catalysed reaction is IMP + H2O = 5-formamido-1-(5-phospho-D-ribosyl)imidazole-4-carboxamide. The protein operates within purine metabolism; IMP biosynthesis via de novo pathway; 5-formamido-1-(5-phospho-D-ribosyl)imidazole-4-carboxamide from 5-amino-1-(5-phospho-D-ribosyl)imidazole-4-carboxamide (10-formyl THF route): step 1/1. Its pathway is purine metabolism; IMP biosynthesis via de novo pathway; IMP from 5-formamido-1-(5-phospho-D-ribosyl)imidazole-4-carboxamide: step 1/1. The polypeptide is Bifunctional purine biosynthesis protein PurH (Anaeromyxobacter sp. (strain Fw109-5)).